Here is a 367-residue protein sequence, read N- to C-terminus: NADH-quinone oxidoreductase subunit D (367 aa).

The protein belongs to the complex I 49 kDa subunit family. NDH-1 is composed of 14 different subunits. Subunits NuoB, C, D, E, F, and G constitute the peripheral sector of the complex.

Its subcellular location is the cell membrane. The catalysed reaction is a quinone + NADH + 5 H(+)(in) = a quinol + NAD(+) + 4 H(+)(out). NDH-1 shuttles electrons from NADH, via FMN and iron-sulfur (Fe-S) centers, to quinones in the respiratory chain. The immediate electron acceptor for the enzyme in this species is believed to be a menaquinone. Couples the redox reaction to proton translocation (for every two electrons transferred, four hydrogen ions are translocated across the cytoplasmic membrane), and thus conserves the redox energy in a proton gradient. This chain is NADH-quinone oxidoreductase subunit D, found in Geobacillus kaustophilus (strain HTA426).